The primary structure comprises 570 residues: PTS system lactose-specific EIICB component (570 aa).

The region spanning 9 to 410 is the PTS EIIC type-3 domain; the sequence is IEKGKPFFEK…VVDIIIYYPF (402 aa). 9 helical membrane-spanning segments follow: residues 31-51, 65-85, 104-124, 133-153, 178-198, 223-243, 283-303, 340-360, and 382-402; these read GFIS…IAYV, AILM…VAGT, INFI…ASDP, AFMG…TVIV, FKDL…DLVI, GWIG…VGIH, MFIV…MFMW, VFFI…KLFV, and IIMG…LIVV. In terms of domain architecture, PTS EIIB type-3 spans 467 to 570; that stretch reads QTNVLVLCAG…LDFVQQQFEN (104 aa). Cysteine 474 serves as the catalytic Phosphocysteine intermediate; for EIIB activity. Cysteine 474 bears the Phosphocysteine; by EIIA mark.

The protein localises to the cell membrane. It catalyses the reaction lactose(out) + N(pros)-phospho-L-histidyl-[protein] = lactose 6-phosphate(in) + L-histidyl-[protein]. Its function is as follows. The phosphoenolpyruvate-dependent sugar phosphotransferase system (sugar PTS), a major carbohydrate active transport system, catalyzes the phosphorylation of incoming sugar substrates concomitantly with their translocation across the cell membrane. The enzyme II LacEF PTS system is involved in lactose transport, but can also use galactose, isopropyl beta-thio-galactopyranoside and thiomethyl beta-D-galactopyranoside (TMG) as substrates. This chain is PTS system lactose-specific EIICB component, found in Staphylococcus aureus.